Here is a 573-residue protein sequence, read N- to C-terminus: MQDTKYYEPTNIFRQPAINIKKRSDKKRILQSMMTLSTYKKTWQNNTSKMNSPILRKASDNFNDYYTTKKLKSDYWKLYGVDESELSIPSDMSIVDNILLVSTMNEKDNLKLFEISAEKKLKELQTITVPGKPITCICLLPMVDFPPQIFPSSQINPNHNQLILTGHQDGIVNLIATSTYKGCAKIIKRFNHNKFLKSTVSTSIPILEITPKTAPILKVSPWNKTGFVSLLNDSLFIYDLKSNLDCIKTPIFLQSYPGINSFAVNEFHDPFLLALVGSKFGPNGISLLDLRTNLYIPDILDNSISAGCGKDHLQRKNTSLDCVWISNHHVAQSLNDKIQIWDIQSCDGKPVCELYAKKGYIESLKFNENTGALYSSDDQGFVICWDLQNLQNMKYGELVHGFNSISLDSESELLLTKQVFQCGNIIVSGMSDKNICLKSNDTKANGKGCGFLFLDMANDGSLVTLDNFCELGLHQICQVQFNVDTGKIIDGNGTGKSGISDSSMLSLSNESDHSMTETSDDMFSNSGNWDCSSANTVSEGRLNDDQEDIVFTKRMYSVNDVHLSGSTIDTTVV.

WD repeat units lie at residues 144–185 (DFPP…GCAK), 315–351 (RKNT…GKPV), 356–395 (AKKG…NMKY), and 397–448 (ELVH…NGKG). The span at 500–509 (SDSSMLSLSN) shows a compositional bias: low complexity. Residues 500–519 (SDSSMLSLSNESDHSMTETS) form a disordered region. A Glycyl lysine isopeptide (Lys-Gly) (interchain with G-Cter in ubiquitin) cross-link involves residue K553.

Belongs to the WD repeat DSE1 family.

Its subcellular location is the bud neck. Functionally, involved in cell wall metabolism and required for the separation of the mother and daughter cells. This chain is Protein DSE1 (DSE1), found in Saccharomyces cerevisiae (strain ATCC 204508 / S288c) (Baker's yeast).